We begin with the raw amino-acid sequence, 38 residues long: Beta-defensin 1 (38 aa).

3 disulfide bridges follow: cysteine 5–cysteine 34, cysteine 12–cysteine 27, and cysteine 17–cysteine 35.

Belongs to the beta-defensin family. Monomer. Homodimer. As to expression, neutrophilic granules.

The protein localises to the secreted. It localises to the membrane. Its function is as follows. Has bactericidal activity. Active against E.coli ML35 but not against S.aureus 502A. May act as a ligand for C-C chemokine receptor CCR6. Positively regulates the sperm motility and bactericidal activity in a CCR6-dependent manner. Binds to CCR6 and triggers Ca2+ mobilization in the sperm which is important for its motility. The sequence is that of Beta-defensin 1 (DEFB1) from Bos taurus (Bovine).